Here is a 64-residue protein sequence, read N- to C-terminus: Prokaryotic ubiquitin-like protein Pup (64 aa).

The segment at 1–36 (MAQEQTKRGGGGGDDEDVTGTTAAGQERRKKLAQDT) is disordered. The ARC ATPase binding stretch occupies residues 21–58 (TTAAGQERRKKLAQDTDDLLDEIDDVLEENAEDFVRAY). Residues 26 to 52 (QERRKKLAQDTDDLLDEIDDVLEENAE) are a coiled coil. Position 64 is a deamidated glutamine (Gln64). Residue Gln64 forms an Isoglutamyl lysine isopeptide (Gln-Lys) (interchain with K-? in acceptor proteins) linkage.

It belongs to the prokaryotic ubiquitin-like protein family. As to quaternary structure, strongly interacts with the proteasome-associated ATPase ARC through a hydrophobic interface; the interacting region of Pup lies in its C-terminal half. There is one Pup binding site per ARC hexamer ring. In terms of processing, is modified by deamidation of its C-terminal glutamine to glutamate by the deamidase Dop, a prerequisite to the subsequent pupylation process.

It participates in protein degradation; proteasomal Pup-dependent pathway. In terms of biological role, protein modifier that is covalently attached to lysine residues of substrate proteins, thereby targeting them for proteasomal degradation. The tagging system is termed pupylation. This chain is Prokaryotic ubiquitin-like protein Pup, found in Mycobacterium ulcerans (strain Agy99).